Consider the following 153-residue polypeptide: UPF0260 protein YcgN (153 aa).

This sequence belongs to the UPF0260 family.

The chain is UPF0260 protein YcgN from Escherichia coli O6:K15:H31 (strain 536 / UPEC).